A 132-amino-acid chain; its full sequence is Replication enhancer protein (132 aa).

It belongs to the geminiviridae replication enhancer protein family. In terms of assembly, homooligomer. Interacts with the replication-associated protein (REP). Interacts with host proliferating cell nuclear antigen (PCNA). Interacts with host retinoblastoma-related protein 1 (RBR1), and may thereby deregulate the host cell cycle. Oligomerization and interaction with PCNA are necessary for optimal replication enhancement.

In terms of biological role, increases viral DNA accumulation. Enhances infectivity and symptom expression. This Pepper huasteco yellow vein virus (PHYVV) protein is Replication enhancer protein.